The chain runs to 280 residues: Phosphatidylglycerol--prolipoprotein diacylglyceryl transferase (280 aa).

A run of 4 helical transmembrane segments spans residues 30 to 50 (WYGL…RRII), 71 to 91 (FLLW…ILFY), 106 to 126 (IWNG…AIII), and 132 to 152 (AIPL…GLFF). Arg154 is an a 1,2-diacyl-sn-glycero-3-phospho-(1'-sn-glycerol) binding site. 3 helical membrane passes run 188–208 (QLYE…WFVY), 217–237 (GLVT…VEFF), and 251–271 (WLTM…WAIA).

It belongs to the Lgt family.

It localises to the cell inner membrane. It catalyses the reaction L-cysteinyl-[prolipoprotein] + a 1,2-diacyl-sn-glycero-3-phospho-(1'-sn-glycerol) = an S-1,2-diacyl-sn-glyceryl-L-cysteinyl-[prolipoprotein] + sn-glycerol 1-phosphate + H(+). It participates in protein modification; lipoprotein biosynthesis (diacylglyceryl transfer). Catalyzes the transfer of the diacylglyceryl group from phosphatidylglycerol to the sulfhydryl group of the N-terminal cysteine of a prolipoprotein, the first step in the formation of mature lipoproteins. This Rhizobium meliloti (strain 1021) (Ensifer meliloti) protein is Phosphatidylglycerol--prolipoprotein diacylglyceryl transferase.